Consider the following 409-residue polypeptide: Ubiquitin-associated domain-containing protein 1 (409 aa).

At Met1 the chain carries N-acetylmethionine. Positions 14–98 (LRLHICAADG…LLLIKKRVPS (85 aa)) constitute a Ubiquitin-like domain. The interval 101 to 122 (PKMADVSAEEKKKQEQKAPDKD) is disordered. The segment covering 108-122 (AEEKKKQEQKAPDKD) has biased composition (basic and acidic residues). The region spanning 187–231 (DEDERVDETALRQLTEMGFPESRASKALRLNHMSVPQAMEWLIEH) is the UBA 1 domain. The interval 239 to 273 (TPLPGHAAQAGASAAATTSSTSSEAAVGTSVEDEE) is disordered. A compositionally biased stretch (low complexity) spans 245–268 (AAQAGASAAATTSSTSSEAAVGTS). Residues 292–332 (RADARAVISLMEMGFDEKEVIDALRVNNNQQNAACEWLLGD) enclose the UBA 2 domain. The STI1 domain maps to 357 to 396 (NPVVQLGLTNPKTLLAFEDMLENPLNSTQWMNDPETGPVM).

In terms of assembly, component of the KPC complex composed of RNF123/KPC1 and UBAC1/KPC2. Interacts (via ubiquitin-like domain) with RNF123. Interacts (via ubiquitin-like and UBA domains) with the proteasome via its N-terminal domain.

Its subcellular location is the cytoplasm. The protein operates within protein modification; protein ubiquitination. Non-catalytic component of the KPC complex, a E3 ubiquitin-protein ligase complex that mediates polyubiquitination of target proteins, such as CDKN1B and NFKB1. The KPC complex catalyzes polyubiquitination and proteasome-mediated degradation of CDKN1B during G1 phase of the cell cycle. The KPC complex also acts as a key regulator of the NF-kappa-B signaling by promoting maturation of the NFKB1 component of NF-kappa-B by catalyzing ubiquitination of the NFKB1 p105 precursor. Within the KPC complex, UBAC1 acts as an adapter that promotes the transfer of target proteins that have been polyubiquitinated by RNF123/KPC1 to the 26S proteasome. The polypeptide is Ubiquitin-associated domain-containing protein 1 (Ubac1) (Mus musculus (Mouse)).